A 289-amino-acid chain; its full sequence is Mas-related G-protein coupled receptor member G (289 aa).

At 1–13 the chain is on the extracellular side; it reads MLSIFNIWGTFNR. A helical transmembrane segment spans residues 14-34; that stretch reads VLFFLSLTVSLAGLAGNTLLL. Over 35–49 the chain is Cytoplasmic; it reads WHLGLRIKKGPFNTY. A helical transmembrane segment spans residues 50–70; sequence LLHLAAADFLFLSCQVGFSIA. Over 71 to 80 the chain is Extracellular; it reads KIASGYEDTL. The chain crosses the membrane as a helical span at residues 81 to 101; that stretch reads YFPVTFLWFAVGLWLLAAFIV. Topologically, residues 102–123 are cytoplasmic; that stretch reads DCCLSYMFPSFCGPNCRPRYTS. The chain crosses the membrane as a helical span at residues 124-144; it reads FVLCLVIWALTMLAVLLPANA. Residues 145 to 164 lie on the Extracellular side of the membrane; the sequence is CGLLYNRMSLLVCLKYHWVS. A helical membrane pass occupies residues 165–185; the sequence is VVWLGVLASTACGASMFLLVF. At 186 to 200 the chain is on the cytoplasmic side; it reads GNCCSSQPPSKFCKL. Residues 201–221 traverse the membrane as a helical segment; it reads AQCSGILLFFCRLPLVFYWCL. A topological domain (extracellular) is located at residue arginine 222. A helical transmembrane segment spans residues 223–243; that stretch reads PVIKFLLPFFFPLATLLACID. Residues 244–289 are Cytoplasmic-facing; the sequence is SSAKPLLYYLKGRQLRKEPLQVALNRALGEESQSSSGGISLPMSRV.

It belongs to the G-protein coupled receptor 1 family. Mas subfamily.

The protein localises to the cell membrane. Its function is as follows. Orphan receptor. May regulate nociceptor function and/or development, including the sensation or modulation of pain. This is Mas-related G-protein coupled receptor member G (Mrgprg) from Rattus norvegicus (Rat).